Reading from the N-terminus, the 224-residue chain is ATP synthase subunit a (224 aa).

The next 6 helical transmembrane spans lie at 17-37 (LSLNWLSTFLGLLMIPSIYWL), 72-92 (IFISLFSLILFNNFMGLFPYI), 99-119 (LTLTLSLALPLWLCFMLYGWI), 125-145 (MFAHLVPQGTPAILMPFMVCI), 155-175 (GTLAVRLTANMIAGHLLLTLL), and 184-204 (YLLVTFLLVAQIALLVLESAV).

Belongs to the ATPase A chain family. In terms of assembly, F-type ATPases have 2 components, CF(1) - the catalytic core - and CF(0) - the membrane proton channel. CF(1) has five subunits: alpha(3), beta(3), gamma(1), delta(1), epsilon(1). CF(0) has three main subunits: a, b and c.

It localises to the mitochondrion inner membrane. Mitochondrial membrane ATP synthase (F(1)F(0) ATP synthase or Complex V) produces ATP from ADP in the presence of a proton gradient across the membrane which is generated by electron transport complexes of the respiratory chain. F-type ATPases consist of two structural domains, F(1) - containing the extramembraneous catalytic core and F(0) - containing the membrane proton channel, linked together by a central stalk and a peripheral stalk. During catalysis, ATP synthesis in the catalytic domain of F(1) is coupled via a rotary mechanism of the central stalk subunits to proton translocation. Key component of the proton channel; it may play a direct role in the translocation of protons across the membrane. In Drosophila yakuba (Fruit fly), this protein is ATP synthase subunit a (mt:ATPase6).